A 434-amino-acid chain; its full sequence is CCA tRNA nucleotidyltransferase 1, mitochondrial (434 aa).

The N-terminal 41 residues, 1-41, are a transit peptide targeting the mitochondrion; that stretch reads MQSVLYPWHRQVLRCSWSRLCLLKRYLFTMKLQSPEFQSLF. 2 residues coordinate ATP: glycine 64 and arginine 67. Glycine 64 and arginine 67 together coordinate CTP. Mg(2+)-binding residues include aspartate 77 and aspartate 79. ATP contacts are provided by arginine 151, aspartate 194, arginine 197, arginine 200, and arginine 203. 5 residues coordinate CTP: arginine 151, aspartate 194, arginine 197, arginine 200, and arginine 203. Serine 400 carries the post-translational modification Phosphoserine. Lysine 402 bears the N6-acetyllysine mark.

This sequence belongs to the tRNA nucleotidyltransferase/poly(A) polymerase family. In terms of assembly, monomer, and homodimer. Requires Mg(2+) as cofactor.

The protein localises to the mitochondrion. The protein resides in the cytoplasm. Its subcellular location is the nucleus. The enzyme catalyses a tRNA precursor + 2 CTP + ATP = a tRNA with a 3' CCA end + 3 diphosphate. It catalyses the reaction a tRNA with a 3' CCA end + 2 CTP + ATP = a tRNA with a 3' CCACCA end + 3 diphosphate. In terms of biological role, nucleotidyltransferase that catalyzes the addition and repair of the essential 3'-terminal CCA sequence in tRNAs, which is necessary for the attachment of amino acids to the 3' terminus of tRNA molecules, using CTP and ATP as substrates. tRNA 3'-terminal CCA addition is required both for tRNA processing and repair. Promotes tRNA repair and recycling downstream of the ribosome-associated quality control (RQC) pathway by mediating addition of the tRNA 3'-terminal CCA following cleavage by ANKZF1 and repair by ELAC1. Also involved in tRNA surveillance by mediating tandem CCA addition to generate a CCACCA at the 3' terminus of unstable tRNAs and tRNA-like transcripts. While stable tRNAs receive only 3'-terminal CCA, unstable tRNAs beginning with GG are marked with CCACCA and rapidly degraded. The structural flexibility of RNA controls the choice between CCA versus CCACCA addition: following the first CCA addition cycle, nucleotide-binding to the active site triggers a clockwise screw motion, producing torque on the RNA. This ejects stable RNAs, whereas unstable RNAs are refolded while bound to the enzyme and subjected to a second CCA catalytic cycle. The protein is CCA tRNA nucleotidyltransferase 1, mitochondrial (Trnt1) of Mus musculus (Mouse).